Consider the following 146-residue polypeptide: Coactosin (146 aa).

Positions 1 to 132 constitute an ADF-H domain; it reads MADVSSTELK…NEEELMTKVR (132 aa).

The protein belongs to the actin-binding proteins ADF family. Coactosin subfamily. In terms of processing, the N-terminus is blocked.

Its subcellular location is the cytoplasm. The protein resides in the cytoskeleton. Functionally, binds to F-actin in a calcium independent manner. Binds to the filaments along their length. In Dictyostelium discoideum (Social amoeba), this protein is Coactosin (coaA).